The following is a 227-amino-acid chain: Transmembrane emp24 domain-containing protein 4 (227 aa).

The N-terminal stretch at 1-29 (MAGVGAGPLRAMGRQALLLLALCATGAQG) is a signal peptide. Topologically, residues 30 to 194 (LYFHIGETEK…RLTSESTNQR (165 aa)) are lumenal. Residues 39-137 (KRCFIEEIPD…KLRVHLDIQV (99 aa)) form the GOLD domain. N-linked (GlcNAc...) asparagine glycosylation occurs at N117. Positions 147 to 176 (IAAKDKLTELQLRARQLLDQVEQIQKEQDY) form a coiled coil. Residues 195 to 212 (VLWWSIAQTVILILTGIW) traverse the membrane as a helical segment. The Cytoplasmic portion of the chain corresponds to 213–227 (QMRHLKSFFEAKKLV). The COPII vesicle coat-binding signature appears at 220-221 (FF). The COPI vesicle coat-binding motif lies at 220–227 (FFEAKKLV).

The protein belongs to the EMP24/GP25L family.

The protein localises to the endoplasmic reticulum membrane. In terms of biological role, involved in vesicular protein trafficking, mainly in the early secretory pathway. targeting. Involved in the maintenance of the Golgi apparatus. Appears to play a role in the biosynthesis of secreted cargo including processing. Involved in endoplasmic reticulum stress response. May play a role in the regulation of heat-shock response and apoptosis. The polypeptide is Transmembrane emp24 domain-containing protein 4 (TMED4) (Homo sapiens (Human)).